A 124-amino-acid chain; its full sequence is Large ribosomal subunit protein uL22 (124 aa).

It belongs to the universal ribosomal protein uL22 family. Part of the 50S ribosomal subunit.

Its function is as follows. This protein binds specifically to 23S rRNA; its binding is stimulated by other ribosomal proteins, e.g. L4, L17, and L20. It is important during the early stages of 50S assembly. It makes multiple contacts with different domains of the 23S rRNA in the assembled 50S subunit and ribosome. The globular domain of the protein is located near the polypeptide exit tunnel on the outside of the subunit, while an extended beta-hairpin is found that lines the wall of the exit tunnel in the center of the 70S ribosome. The protein is Large ribosomal subunit protein uL22 of Synechococcus sp. (strain JA-2-3B'a(2-13)) (Cyanobacteria bacterium Yellowstone B-Prime).